Reading from the N-terminus, the 185-residue chain is MFFSNKTKEVKTIAKQDLFIXDEIRVREVRLIGLEGEQLGIKPLSEAQALADNANVDLVLIQPQAKPPVAKIMDYGKFKFEYQKKQKEQRKKQSVVTVKEVRLSPTIDKGDFDTKLRNARKFLEKGNKVKVSIRFKGRMITHKEIGAKVLAEFAEATQDIAIIEQRAKMDGRQMFMQLAPATDKK.

It belongs to the IF-3 family. Monomer.

Its subcellular location is the cytoplasm. In terms of biological role, IF-3 binds to the 30S ribosomal subunit and shifts the equilibrium between 70S ribosomes and their 50S and 30S subunits in favor of the free subunits, thus enhancing the availability of 30S subunits on which protein synthesis initiation begins. This Streptococcus pneumoniae serotype 19F (strain G54) protein is Translation initiation factor IF-3.